The sequence spans 336 residues: Polyadenylate-binding protein-interacting protein 12 (336 aa).

Residues 14 to 47 (EAGGLISPSPPSSVTSQESGASSNNDHGGNGIHD) are disordered. Over residues 25–40 (SSVTSQESGASSNNDH) the composition is skewed to polar residues. The PAM2-like motif lies at 75-85 (KLNPMAKEFIP). The short motif at 122–134 (RRKKSFGQQGKRR) is the Bipartite nuclear localization signal element. 2 consecutive RRM domains span residues 150–225 (RTVY…PSKT) and 247–323 (RTIY…PSKT).

In terms of assembly, interacts with MPC. In terms of tissue distribution, expressed in roots, leaves, stems, flowers and siliques. Detected in flowers only in growing organs: gynoecium, petals, stamenal filaments, anther walls and ovules.

It localises to the nucleus. Its function is as follows. Binds nucleotic acids in vitro. The polypeptide is Polyadenylate-binding protein-interacting protein 12 (CID12) (Arabidopsis thaliana (Mouse-ear cress)).